The sequence spans 185 residues: ATP-dependent protease subunit HslV (185 aa).

The active site involves Thr6. Residues Gly162, Cys165, and Thr168 each coordinate Na(+).

The protein belongs to the peptidase T1B family. HslV subfamily. As to quaternary structure, a double ring-shaped homohexamer of HslV is capped on each side by a ring-shaped HslU homohexamer. The assembly of the HslU/HslV complex is dependent on binding of ATP.

The protein resides in the cytoplasm. The catalysed reaction is ATP-dependent cleavage of peptide bonds with broad specificity.. Allosterically activated by HslU binding. Functionally, protease subunit of a proteasome-like degradation complex believed to be a general protein degrading machinery. This is ATP-dependent protease subunit HslV from Nitratidesulfovibrio vulgaris (strain DSM 19637 / Miyazaki F) (Desulfovibrio vulgaris).